Here is a 1231-residue protein sequence, read N- to C-terminus: Alpha-protein kinase 1 (1231 aa).

Residues Phe61, Gln67, Arg116, 150–153 (RQAR), Asp231, Lys233, 236–237 (ST), and Phe295 each bind ADP-D-glycero-beta-D-manno-heptose. Disordered stretches follow at residues 508–540 (ERVS…RSWT), 609–637 (GSGQ…SSRA), 692–739 (GSNN…GDVP), 767–791 (TFAP…SPSQ), 811–843 (PDGS…DEEG), and 859–888 (AHRP…PIFD). Over residues 509–522 (RVSSQDSRSTASSK) the composition is skewed to polar residues. The span at 524–537 (SKKDQGKLQRERGR) shows a compositional bias: basic and acidic residues. A compositionally biased stretch (low complexity) spans 700–714 (SSHSCGSDSWSLSSS). Positions 775–784 (PEGETAESTD) are enriched in acidic residues. The 221-residue stretch at 1003–1223 (KYSKKSELWT…ICHRLSLTRP (221 aa)) folds into the Alpha-type protein kinase domain.

It belongs to the protein kinase superfamily. Alpha-type protein kinase family. ALPK subfamily. As to expression, widely expressed. Expressed in the retina and in sweat glands, especially in the myoepithelial cells.

It is found in the cytoplasm. It localises to the cytosol. The protein resides in the cytoskeleton. Its subcellular location is the spindle pole. The protein localises to the microtubule organizing center. It is found in the centrosome. It localises to the cell projection. The protein resides in the cilium. It catalyses the reaction L-seryl-[protein] + ATP = O-phospho-L-seryl-[protein] + ADP + H(+). The catalysed reaction is L-threonyl-[protein] + ATP = O-phospho-L-threonyl-[protein] + ADP + H(+). Its activity is regulated as follows. Serine/threonine-protein kinase activity is stimulated upon ADP-D-glycero-beta-D-manno-heptose (ADP-Heptose)-binding. Functionally, serine/threonine-protein kinase that detects bacterial pathogen-associated molecular pattern metabolites (PAMPs) and initiates an innate immune response, a critical step for pathogen elimination and engagement of adaptive immunity. Specifically recognizes and binds ADP-D-glycero-beta-D-manno-heptose (ADP-Heptose), a potent PAMP present in all Gram-negative and some Gram-positive bacteria. ADP-Heptose-binding stimulates its kinase activity to phosphorylate and activate TIFA, triggering pro-inflammatory NF-kappa-B signaling. May be involved in monosodium urate monohydrate (MSU)-induced inflammation by mediating phosphorylation of unconventional myosin MYO9A. May also play a role in apical protein transport by mediating phosphorylation of unconventional myosin MYO1A. May play a role in ciliogenesis. This is Alpha-protein kinase 1 from Mus musculus (Mouse).